We begin with the raw amino-acid sequence, 1068 residues long: Protein AF-10 (1068 aa).

The segment at 22-74 (IGGCCVCSDERGWAENPLVYCDGHGCSVAVHQACYGIVQVPTGPWFCRKCESQ) adopts a PHD-type 1 zinc-finger fold. The segment at 79 to 112 (RVRCELCPHKDGALKRTDNGGWAHVVCALYIPEV) adopts a C2HC pre-PHD-type zinc-finger fold. Residues 80–287 (VRCELCPHKD…SLKRLEDTTA (208 aa)) are self-association. The interval 106–190 (ALYIPEVQFA…EGNGADNVQY (85 aa)) is required for interaction with histone H3. The PHD-type 2 zinc finger occupies 135–198 (KTCYICDEQG…QYCGYCKYHF (64 aa)). Residues 141–233 (DEQGRESKAA…QDKHHEKEKK (93 aa)) form an interaction with FSTL3 region. Residues 206–260 (RGSNRSYDQSLSDSSSHSQDKHHEKEKKKYKEKDKHKQKHKKQPEPSPALVPSLT) form a disordered region. Low complexity predominate over residues 211–222 (SYDQSLSDSSSH). Ser217 bears the Phosphoserine mark. A compositionally biased stretch (basic and acidic residues) spans 223 to 240 (SQDKHHEKEKKKYKEKDK). At Ser252 the chain carries Phosphoserine. Residue Lys280 forms a Glycyl lysine isopeptide (Lys-Gly) (interchain with G-Cter in SUMO2) linkage. Over residues 291–305 (NANFQEVSAHTSSGK) the composition is skewed to polar residues. The interval 291–505 (NANFQEVSAH…SSASPTSSVA (215 aa)) is disordered. Over residues 306–317 (DVSETRGSEGKG) the composition is skewed to basic and acidic residues. Residues 311 to 674 (RGSEGKGKKS…QDLGDNSRNL (364 aa)) form a DNA-binding region. Residues 352-372 (SFSGTPGSVKSSSGSSVQSPQ) show a composition bias toward low complexity. 2 stretches are compositionally biased toward polar residues: residues 387–396 (YSHSQQSSAT) and 404–446 (SGSQ…SSLP). A Phosphoserine modification is found at Ser436. A compositionally biased stretch (basic residues) spans 465 to 483 (EKKRKGNKQSKHGPGRPKG). Residues 490-505 (VSHLSVSSASPTSSVA) show a composition bias toward low complexity. At Ser532 the chain carries Phosphoserine. Low complexity predominate over residues 583–594 (SGSGSSTPVSSS). Disordered stretches follow at residues 583–612 (SGSGSSTPVSSSHLPQQSSGHLQQVGALSP) and 660–708 (NNQT…SLEN). Polar residues-rich tracts occupy residues 595-604 (HLPQQSSGHL) and 660-673 (NNQTDQDLGDNSRN). Positions 674 to 694 (LVGRGSSPRGSLSPRSPVSSL) are enriched in low complexity. Phosphoserine is present on residues Ser684, Ser686, and Ser689. The transactivation domain; required for DOT1L-binding stretch occupies residues 703–784 (NSSLENLPPV…NAQLSVPFPT (82 aa)). The segment at 750 to 778 (LQVENRRLEEQIKNLTAKKERLQLLNAQL) is leucine-zipper. Polar residues predominate over residues 800 to 814 (AQTAPTTDSLNSSKS). Positions 800–865 (AQTAPTTDSL…SPAQQGSGVS (66 aa)) are disordered. Low complexity-rich tracts occupy residues 834 to 848 (LTSSGQSTSSSSALS) and 855 to 865 (QSPAQQGSGVS).

Self-associates. Interacts with FSTL3 isoform 2; the interaction enhances MLLT10 in vitro transcriptional activity and self-association. Interacts with YEATS4. Interacts with SS18. Interacts with DOT1L; this interaction also occurs with the KMT2A/MLL1 fusion protein. Interacts with histone H3; interaction is necessary for MLLT10 binding to nucleosomes; interaction is inhibited by histone H3 'Lys-27' methylations (H3K27me1, H3K27me2 and H3K27me3) amd acetylation; interaction stabilizes association of MLLT10 at chromatin; interaction is essential for histone H3 'Lys-79' dimethylation (H3K79me2). In terms of tissue distribution, expressed abundantly in testis.

Its subcellular location is the nucleus. Its function is as follows. Probably involved in transcriptional regulation. In vitro or as fusion protein with KMT2A/MLL1 has transactivation activity. Binds to cruciform DNA. In cells, binding to unmodified histone H3 regulates DOT1L functions including histone H3 'Lys-79' dimethylation (H3K79me2) and gene activation. This Homo sapiens (Human) protein is Protein AF-10.